A 300-amino-acid polypeptide reads, in one-letter code: ESX-5 secretion-associated protein EspG5 (300 aa).

Belongs to the EspG family. Interacts specifically with ESX-5-dependent PE/PPE proteins. Forms a 1:1:1 heterotrimeric complex with the PE25/PPE41 dimer, via PPE41. Binding of EspG5 does not cause conformational changes in the PE25/PPE41 dimer. Forms a 1:1:1 heterotrimeric complex with the PE8/PPE15 dimer, via PPE15.

It localises to the cytoplasm. In terms of biological role, specific chaperone for cognate PE/PPE proteins. Plays an important role in preventing aggregation of PE/PPE dimers. This chain is ESX-5 secretion-associated protein EspG5, found in Mycobacterium tuberculosis (strain ATCC 25618 / H37Rv).